A 417-amino-acid chain; its full sequence is Bifunctional thiamine biosynthesis protein ThiDN (417 aa).

Residues 1–235 (MVILAIGGYD…KSKFGYNSNP (235 aa)) are hydroxymethylpyrimidine/phosphomethylpyrimidine kinase. A 4-amino-5-hydroxymethyl-2-methylpyrimidine-binding site is contributed by Gln-41. The interval 236–417 (TYINKEKVIK…VIQKIYNTLM (182 aa)) is thiamine-phosphate synthase.

This sequence in the N-terminal section; belongs to the ThiD family. In the C-terminal section; belongs to the ThiN family.

The catalysed reaction is 4-amino-5-hydroxymethyl-2-methylpyrimidine + ATP = 4-amino-2-methyl-5-(phosphooxymethyl)pyrimidine + ADP + H(+). It carries out the reaction 4-amino-2-methyl-5-(phosphooxymethyl)pyrimidine + ATP = 4-amino-2-methyl-5-(diphosphooxymethyl)pyrimidine + ADP. The enzyme catalyses 2-[(2R,5Z)-2-carboxy-4-methylthiazol-5(2H)-ylidene]ethyl phosphate + 4-amino-2-methyl-5-(diphosphooxymethyl)pyrimidine + 2 H(+) = thiamine phosphate + CO2 + diphosphate. It catalyses the reaction 2-(2-carboxy-4-methylthiazol-5-yl)ethyl phosphate + 4-amino-2-methyl-5-(diphosphooxymethyl)pyrimidine + 2 H(+) = thiamine phosphate + CO2 + diphosphate. The catalysed reaction is 4-methyl-5-(2-phosphooxyethyl)-thiazole + 4-amino-2-methyl-5-(diphosphooxymethyl)pyrimidine + H(+) = thiamine phosphate + diphosphate. It participates in cofactor biosynthesis; thiamine diphosphate biosynthesis; 4-amino-2-methyl-5-diphosphomethylpyrimidine from 5-amino-1-(5-phospho-D-ribosyl)imidazole. It functions in the pathway cofactor biosynthesis; thiamine diphosphate biosynthesis; thiamine phosphate from 4-amino-2-methyl-5-diphosphomethylpyrimidine and 4-methyl-5-(2-phosphoethyl)-thiazole: step 1/1. In terms of biological role, catalyzes the phosphorylation of hydroxymethylpyrimidine phosphate (HMP-P) to HMP-PP, and of HMP to HMP-P. Functionally, condenses 4-methyl-5-(beta-hydroxyethyl)thiazole monophosphate (THZ-P) and 4-amino-5-hydroxymethyl pyrimidine pyrophosphate (HMP-PP) to form thiamine monophosphate (TMP). This is Bifunctional thiamine biosynthesis protein ThiDN (thiDN) from Methanocaldococcus jannaschii (strain ATCC 43067 / DSM 2661 / JAL-1 / JCM 10045 / NBRC 100440) (Methanococcus jannaschii).